A 212-amino-acid chain; its full sequence is Pyridoxine/pyridoxamine 5'-phosphate oxidase (212 aa).

Substrate is bound by residues 8–11 and Lys66; that span reads RREY. FMN contacts are provided by residues 61 to 66, 76 to 77, Arg82, Lys83, and Gln105; these read RIVLLK and FT. Substrate is bound by residues Tyr123, Arg127, and Ser131. Residues 140–141 and Trp185 contribute to the FMN site; that span reads QS. 191–193 is a binding site for substrate; the sequence is RLH. Arg195 contributes to the FMN binding site.

It belongs to the pyridoxamine 5'-phosphate oxidase family. In terms of assembly, homodimer. It depends on FMN as a cofactor.

It carries out the reaction pyridoxamine 5'-phosphate + O2 + H2O = pyridoxal 5'-phosphate + H2O2 + NH4(+). The catalysed reaction is pyridoxine 5'-phosphate + O2 = pyridoxal 5'-phosphate + H2O2. The protein operates within cofactor metabolism; pyridoxal 5'-phosphate salvage; pyridoxal 5'-phosphate from pyridoxamine 5'-phosphate: step 1/1. It functions in the pathway cofactor metabolism; pyridoxal 5'-phosphate salvage; pyridoxal 5'-phosphate from pyridoxine 5'-phosphate: step 1/1. Functionally, catalyzes the oxidation of either pyridoxine 5'-phosphate (PNP) or pyridoxamine 5'-phosphate (PMP) into pyridoxal 5'-phosphate (PLP). This Shewanella amazonensis (strain ATCC BAA-1098 / SB2B) protein is Pyridoxine/pyridoxamine 5'-phosphate oxidase.